The chain runs to 554 residues: Phosphomethylpyrimidine synthase (554 aa).

Residues Asn-191, Met-220, Tyr-249, His-285, 305–307 (SRG), 346–349 (DGLR), and Glu-385 contribute to the substrate site. His-389 is a binding site for Zn(2+). Tyr-412 contacts substrate. A Zn(2+)-binding site is contributed by His-453. Positions 533, 536, and 541 each coordinate [4Fe-4S] cluster.

It belongs to the ThiC family. Homodimer. [4Fe-4S] cluster is required as a cofactor.

It carries out the reaction 5-amino-1-(5-phospho-beta-D-ribosyl)imidazole + S-adenosyl-L-methionine = 4-amino-2-methyl-5-(phosphooxymethyl)pyrimidine + CO + 5'-deoxyadenosine + formate + L-methionine + 3 H(+). The protein operates within cofactor biosynthesis; thiamine diphosphate biosynthesis. In terms of biological role, catalyzes the synthesis of the hydroxymethylpyrimidine phosphate (HMP-P) moiety of thiamine from aminoimidazole ribotide (AIR) in a radical S-adenosyl-L-methionine (SAM)-dependent reaction. This is Phosphomethylpyrimidine synthase from Ehrlichia chaffeensis (strain ATCC CRL-10679 / Arkansas).